A 284-amino-acid chain; its full sequence is Nucleotide-binding protein Sputw3181_3461 (284 aa).

8 to 15 is a binding site for ATP; sequence GRSGSGKS. Position 56 to 59 (56 to 59) interacts with GTP; that stretch reads DVRN.

The protein belongs to the RapZ-like family.

Functionally, displays ATPase and GTPase activities. The protein is Nucleotide-binding protein Sputw3181_3461 of Shewanella sp. (strain W3-18-1).